The following is a 258-amino-acid chain: D-beta-hydroxybutyrate dehydrogenase (258 aa).

6–30 (VITGSTSGIGLAIARTLAKAGANIV) serves as a coordination point for NAD(+). Ser-140 contacts substrate. Tyr-153 (proton acceptor) is an active-site residue.

Belongs to the short-chain dehydrogenases/reductases (SDR) family.

The enzyme catalyses (R)-3-hydroxybutanoate + NAD(+) = acetoacetate + NADH + H(+). This Rhizobium meliloti (strain 1021) (Ensifer meliloti) protein is D-beta-hydroxybutyrate dehydrogenase (bdhA).